A 426-amino-acid chain; its full sequence is Adenylosuccinate synthetase (426 aa).

GTP-binding positions include 14-20 (GDEGKGK) and 42-44 (GHT). D15 functions as the Proton acceptor in the catalytic mechanism. D15 and G42 together coordinate Mg(2+). IMP is bound by residues 15 to 18 (DEGK), 40 to 43 (NAGH), T130, R144, Q224, T239, and R303. Residue H43 is the Proton donor of the active site. 299–305 (TVTKRPR) contributes to the substrate binding site. Residues R305, 331 to 333 (LID), and 413 to 415 (SVG) each bind GTP.

Belongs to the adenylosuccinate synthetase family. In terms of assembly, homodimer. It depends on Mg(2+) as a cofactor.

It is found in the cytoplasm. The catalysed reaction is IMP + L-aspartate + GTP = N(6)-(1,2-dicarboxyethyl)-AMP + GDP + phosphate + 2 H(+). The protein operates within purine metabolism; AMP biosynthesis via de novo pathway; AMP from IMP: step 1/2. Plays an important role in the de novo pathway of purine nucleotide biosynthesis. Catalyzes the first committed step in the biosynthesis of AMP from IMP. The sequence is that of Adenylosuccinate synthetase from Malacoplasma penetrans (strain HF-2) (Mycoplasma penetrans).